Here is a 222-residue protein sequence, read N- to C-terminus: MGASGRICTVVPVEDAGEAAMLALSSPTGCVELRLDFYPGDPGEALELLATRLHSPARVVVTLRSAGHGGLDRRARGERRAVLARLEDLAPEGWLVDYEVEDLHASSGCSGCIASSHPTTPPTPRRALEEAAVAERLGASAYKLVYPGVEPWEQAAAARLVAEAGGFATSFTLGPGTLASRLTALALGAPLVFGSHPRAPLDGVPQSSEIMELYLRMGLGES.

Residues 32–34 (ELR) and Arg64 contribute to the 3-dehydroquinate site. The Proton donor/acceptor role is filled by His117. Lys143 functions as the Schiff-base intermediate with substrate in the catalytic mechanism. Position 181 (Arg181) interacts with 3-dehydroquinate.

The protein belongs to the type-I 3-dehydroquinase family. As to quaternary structure, homodimer.

The enzyme catalyses 3-dehydroquinate = 3-dehydroshikimate + H2O. It functions in the pathway metabolic intermediate biosynthesis; chorismate biosynthesis; chorismate from D-erythrose 4-phosphate and phosphoenolpyruvate: step 3/7. Involved in the third step of the chorismate pathway, which leads to the biosynthesis of aromatic amino acids. Catalyzes the cis-dehydration of 3-dehydroquinate (DHQ) and introduces the first double bond of the aromatic ring to yield 3-dehydroshikimate. This chain is 3-dehydroquinate dehydratase, found in Aeropyrum pernix (strain ATCC 700893 / DSM 11879 / JCM 9820 / NBRC 100138 / K1).